We begin with the raw amino-acid sequence, 760 residues long: Acetyl-CoA decarbonylase/synthase complex subunit alpha 1 (760 aa).

Positions 56, 59, 60, 62, 67, and 77 each coordinate [4Fe-4S] cluster. His-100 is a CO binding site. [Ni-4Fe-4S] cluster contacts are provided by His-231, Cys-259, and Cys-298. 2 consecutive 4Fe-4S ferredoxin-type domains span residues 381 to 410 and 418 to 450; these read KKLQKEAKRCLGCGDCERVCPNDLPIVEAM and FEGLADLFDRCVGCARCESECPTKLRVMNMIED. [4Fe-4S] cluster is bound by residues Cys-390, Cys-393, Cys-396, Cys-400, Cys-428, Cys-431, Cys-434, and Cys-438. 3 residues coordinate [Ni-4Fe-4S] cluster: Cys-496, Cys-525, and Cys-560.

This sequence belongs to the Ni-containing carbon monoxide dehydrogenase family. As to quaternary structure, heterotetramer of two alpha and two epsilon subunits. The ACDS complex is made up of alpha, epsilon, beta, gamma and delta subunits with a probable stoichiometry of (alpha(2)epsilon(2))(4)-beta(8)-(gamma(1)delta(1))(8). It depends on [4Fe-4S] cluster as a cofactor. [Ni-4Fe-4S] cluster serves as cofactor.

It carries out the reaction CO + 2 oxidized [2Fe-2S]-[ferredoxin] + H2O = 2 reduced [2Fe-2S]-[ferredoxin] + CO2 + 2 H(+). In terms of biological role, part of the ACDS complex that catalyzes the reversible cleavage of acetyl-CoA, allowing autotrophic growth from CO(2). The alpha-epsilon subcomponent functions as a carbon monoxide dehydrogenase. This is Acetyl-CoA decarbonylase/synthase complex subunit alpha 1 from Methanopyrus kandleri (strain AV19 / DSM 6324 / JCM 9639 / NBRC 100938).